The sequence spans 437 residues: GTPase Der (437 aa).

EngA-type G domains follow at residues 3 to 167 and 176 to 352; these read NIVA…TKKV and PAIA…DIRQ. Residues 9–16, 56–60, 119–122, 182–189, 229–233, and 294–297 contribute to the GTP site; these read GRPNVGKS, DTGGW, NKAD, GKPNVGKS, DTAGI, and NKWD. The 85-residue stretch at 353-437 folds into the KH-like domain; the sequence is IKIPTSQLNR…TPINIFMREK (85 aa).

The protein belongs to the TRAFAC class TrmE-Era-EngA-EngB-Septin-like GTPase superfamily. EngA (Der) GTPase family. In terms of assembly, associates with the 50S ribosomal subunit.

Functionally, GTPase that plays an essential role in the late steps of ribosome biogenesis. The polypeptide is GTPase Der (Azobacteroides pseudotrichonymphae genomovar. CFP2).